Reading from the N-terminus, the 263-residue chain is 4-hydroxy-tetrahydrodipicolinate reductase (263 aa).

Residues 7-12 (GFKGRM), 96-98 (GTT), and 122-125 (APNF) contribute to the NAD(+) site. His-152 acts as the Proton donor/acceptor in catalysis. His-153 contacts (S)-2,3,4,5-tetrahydrodipicolinate. Lys-156 serves as the catalytic Proton donor. 162–163 (GT) serves as a coordination point for (S)-2,3,4,5-tetrahydrodipicolinate.

Belongs to the DapB family.

Its subcellular location is the cytoplasm. It carries out the reaction (S)-2,3,4,5-tetrahydrodipicolinate + NAD(+) + H2O = (2S,4S)-4-hydroxy-2,3,4,5-tetrahydrodipicolinate + NADH + H(+). The enzyme catalyses (S)-2,3,4,5-tetrahydrodipicolinate + NADP(+) + H2O = (2S,4S)-4-hydroxy-2,3,4,5-tetrahydrodipicolinate + NADPH + H(+). It functions in the pathway amino-acid biosynthesis; L-lysine biosynthesis via DAP pathway; (S)-tetrahydrodipicolinate from L-aspartate: step 4/4. Its function is as follows. Catalyzes the conversion of 4-hydroxy-tetrahydrodipicolinate (HTPA) to tetrahydrodipicolinate. This chain is 4-hydroxy-tetrahydrodipicolinate reductase, found in Listeria welshimeri serovar 6b (strain ATCC 35897 / DSM 20650 / CCUG 15529 / CIP 8149 / NCTC 11857 / SLCC 5334 / V8).